The primary structure comprises 211 residues: N-(5'-phosphoribosyl)anthranilate isomerase (211 aa).

Belongs to the TrpF family.

It carries out the reaction N-(5-phospho-beta-D-ribosyl)anthranilate = 1-(2-carboxyphenylamino)-1-deoxy-D-ribulose 5-phosphate. It participates in amino-acid biosynthesis; L-tryptophan biosynthesis; L-tryptophan from chorismate: step 3/5. The polypeptide is N-(5'-phosphoribosyl)anthranilate isomerase (Chromohalobacter salexigens (strain ATCC BAA-138 / DSM 3043 / CIP 106854 / NCIMB 13768 / 1H11)).